Consider the following 107-residue polypeptide: Putative double-stranded DNA mimic protein NTHI1680 (107 aa).

It belongs to the putative dsDNA mimic protein family.

Functionally, may act as a double-stranded DNA (dsDNA) mimic. Probably regulates the activity of a dsDNA-binding protein. This chain is Putative double-stranded DNA mimic protein NTHI1680, found in Haemophilus influenzae (strain 86-028NP).